We begin with the raw amino-acid sequence, 217 residues long: Phosphatidylserine decarboxylase proenzyme (217 aa).

The active-site Schiff-base intermediate with substrate; via pyruvic acid is Ser-183. Ser-183 carries the post-translational modification Pyruvic acid (Ser); by autocatalysis.

This sequence belongs to the phosphatidylserine decarboxylase family. PSD-A subfamily. In terms of assembly, heterodimer of a large membrane-associated beta subunit and a small pyruvoyl-containing alpha subunit. Requires pyruvate as cofactor. Is synthesized initially as an inactive proenzyme. Formation of the active enzyme involves a self-maturation process in which the active site pyruvoyl group is generated from an internal serine residue via an autocatalytic post-translational modification. Two non-identical subunits are generated from the proenzyme in this reaction, and the pyruvate is formed at the N-terminus of the alpha chain, which is derived from the carboxyl end of the proenzyme. The post-translation cleavage follows an unusual pathway, termed non-hydrolytic serinolysis, in which the side chain hydroxyl group of the serine supplies its oxygen atom to form the C-terminus of the beta chain, while the remainder of the serine residue undergoes an oxidative deamination to produce ammonia and the pyruvoyl prosthetic group on the alpha chain.

It localises to the cell membrane. The catalysed reaction is a 1,2-diacyl-sn-glycero-3-phospho-L-serine + H(+) = a 1,2-diacyl-sn-glycero-3-phosphoethanolamine + CO2. It participates in phospholipid metabolism; phosphatidylethanolamine biosynthesis; phosphatidylethanolamine from CDP-diacylglycerol: step 2/2. Catalyzes the formation of phosphatidylethanolamine (PtdEtn) from phosphatidylserine (PtdSer). This Cupriavidus pinatubonensis (strain JMP 134 / LMG 1197) (Cupriavidus necator (strain JMP 134)) protein is Phosphatidylserine decarboxylase proenzyme.